The primary structure comprises 601 residues: Sodium-dependent phosphate transport protein 2C (601 aa).

Residues 1 to 75 lie on the Cytoplasmic side of the membrane; that stretch reads MPNSLAGDQV…HQVVSGFLKA (75 aa). Phosphoserine is present on Ser-4. The chain crosses the membrane as a helical span at residues 76 to 96; it reads CGLLGSLYFFICSLDILSSAF. At 97–110 the chain is on the extracellular side; that stretch reads QLLGSKMAGDIFKD. Residues 111-131 traverse the membrane as a helical segment; that stretch reads NVVLSNPVAGLVIGVVVTVLV. At 132-187 the chain is on the cytoplasmic side; the sequence is QSSSTSSSIVVSMVASKSLTVQASVPIIMGVNVGTSITSTLVSMAQSGDRDEFQRA. A helical transmembrane segment spans residues 188–208; it reads FGGSAVHGIFNWLTVLVLLPL. Residues 209-324 lie on the Extracellular side of the membrane; it reads ENATAALERL…FAGSELTDLA (116 aa). Residues Asn-210, Asn-264, Asn-267, and Asn-299 are each glycosylated (N-linked (GlcNAc...) asparagine). The cysteines at positions 275 and 311 are disulfide-linked. Residues 325 to 345 form a helical membrane-spanning segment; sequence VGFILLAGSLLVLCVCLVLIV. Residues 346–369 lie on the Cytoplasmic side of the membrane; it reads KLLNSVLRGRIAQAVKTVINADFP. Residues 370-390 form a helical membrane-spanning segment; sequence FPFGWLSGYLAILVGAGLTFL. The Extracellular portion of the chain corresponds to 391–447; the sequence is LQSSSVFTAAIVPLMGVGVINLERAYPLFLGSNIGTTTTALLAALASPADTLLFAVQ. A helical membrane pass occupies residues 448-468; sequence VALIHFFFNLAGILLWYLVPV. The Cytoplasmic segment spans residues 469-487; sequence LRLPIPLAKRFGDLTAQYR. Residues 488 to 508 form a helical membrane-spanning segment; it reads WVAIVYLLLTFLLLPLAAFGL. At 509 to 512 the chain is on the extracellular side; that stretch reads SLAG. The helical transmembrane segment at 513–533 threads the bilayer; it reads GSVLAAVGGPLVGLVLLIILV. The Cytoplasmic segment spans residues 534–601; it reads NVLQRHRPSW…NPQVIASQQL (68 aa).

The protein belongs to the SLC34A transporter family. Highly expressed in the kidney. Not found in any of the other tested tissues.

Its subcellular location is the apical cell membrane. It carries out the reaction 2 Na(+)(out) + phosphate(out) = 2 Na(+)(in) + phosphate(in). Its function is as follows. Involved in actively transporting phosphate into cells via Na(+) cotransport in the renal brush border membrane. The cotransport has a Na(+):Pi stoichiometry of 2:1 and is electroneutral. The chain is Sodium-dependent phosphate transport protein 2C (Slc34a3) from Rattus norvegicus (Rat).